We begin with the raw amino-acid sequence, 315 residues long: ATP synthase gamma chain (315 aa).

It belongs to the ATPase gamma chain family. F-type ATPases have 2 components, CF(1) - the catalytic core - and CF(0) - the membrane proton channel. CF(1) has five subunits: alpha(3), beta(3), gamma(1), delta(1), epsilon(1). CF(0) has three main subunits: a, b and c.

Its subcellular location is the cellular thylakoid membrane. Functionally, produces ATP from ADP in the presence of a proton gradient across the membrane. The gamma chain is believed to be important in regulating ATPase activity and the flow of protons through the CF(0) complex. This is ATP synthase gamma chain from Synechococcus sp. (strain RCC307).